A 417-amino-acid polypeptide reads, in one-letter code: Methyltransferase/ribosomally synthesized cyclic peptide dendrothelin A precursor dbihMA (417 aa).

The tract at residues 1–251 is methyltransferase domain; it reads MESSTQTKPG…GVSTFYIPPK (251 aa). Active-site residues include Arg-72, Tyr-76, and Tyr-98. Residues Tyr-98, His-100, Val-103, Ala-130, Gln-172, Ala-213, Ser-244, and Thr-245 each contribute to the S-adenosyl-L-methionine site. Residues 252 to 378 are clasp domain; it reads ARKDINTDII…WAIRCAMKNM (127 aa). Residues 379–399 are precursor leader; the sequence is PSSLLEAASQSVEEASMNGFP. N-methylvaline is present on residues Val-401 and Val-403. Thr-404 bears the N-methylthreonine mark. At Gly-405 the chain carries N-methylglycine. Position 406 is an N-methylisoleucine (Ile-406). Position 407 is an N-methylvaline (Val-407). N-methylglycine is present on Gly-408. Ile-410 bears the N-methylisoleucine mark. At Gly-411 the chain carries N-methylglycine. The residue at position 413 (Val-413) is an N-methylvaline.

This sequence in the N-terminal section; belongs to the precorrin methyltransferase family. As to quaternary structure, homodimer. DbiMA automethylates at Val-401, Val-403, Thr-404, Gly-405, Ile-406, Val-407, Gly-408, Ile-410, Gly-411 and Val-413 before being processed by the prolyloligopeptidase dbiP which likely forms a peptidyl ester upon removal of the follower propeptide, which then undergoes macrocyclization with the N-terminus of the modified core peptide. Peptide backbone alpha-N-methylations change the physicochemical properties of amide bonds to provide structural constraints and other favorable characteristics including biological membrane permeability to peptides.

The protein operates within mycotoxin biosynthesis. Its function is as follows. Fusion protein of the methyltransferase dbiM and the dendrothelin core peptide; part of the gene cluster that mediates the biosynthesis of dendrothelin A, a highly methylated cyclic dodecapeptide showing slight nematodicidal activity. Dendrothelin A derives from the C-terminus of the dbiMA protein, and it is the dbiMA protein that methylates its own C-terminus using S-adenosyl methionine (SAM). The C-terminus is subsequently cleaved off and macrocyclized by the prolyloligopeptidase dbiP to give the final product. In Dendrothele bispora (strain CBS 962.96), this protein is Methyltransferase/ribosomally synthesized cyclic peptide dendrothelin A precursor dbihMA.